The chain runs to 183 residues: Copper metallothionein 2 (183 aa).

Positions 1-35 are cys-rich copper-binding 1; that stretch reads MAFNPNPEKTTSCCSTSKAQDKCTCPKGKCECETC. The tract at residues 36-45 is spacer B1; the sequence is PKSTKTPGSG. Residues 46-79 form a cys-rich copper-binding 2 region; the sequence is PCNCGVKEKVSTCGCNGSGAACTCPPGQCACDSC. Positions 80-88 are spacer B2; sequence PRKAKSVST. Residues 89-110 are cys-rich copper-binding 3; that stretch reads CGCGGSAAACSCPPGKCACDSC. The spacer B3 stretch occupies residues 111-120; sequence PKQAQEKVSS. The interval 121–142 is cys-rich copper-binding 4; the sequence is CACNGSGGACTCPPGKCSCSGC. Positions 143 to 156 are spacer B4; it reads PAQAKENPADQPTT. The cys-rich copper-binding 5 stretch occupies residues 157 to 183; that stretch reads CGCQGVGVACTCPPGQCACDGCPAKAK.

This sequence belongs to the metallothionein superfamily.

It is found in the cytoplasm. It localises to the cell cortex. Its function is as follows. Copper metallothionein that protects the cell against copper toxicity by tightly chelating copper ions. Required for antioxidant-mediated growth rescue in the presence of fluconazole. Acts as a critical factors for lung colonization and virulence. The sequence is that of Copper metallothionein 2 from Cryptococcus neoformans var. grubii serotype A (strain H99 / ATCC 208821 / CBS 10515 / FGSC 9487) (Filobasidiella neoformans var. grubii).